A 447-amino-acid chain; its full sequence is Rab GDP dissociation inhibitor alpha (447 aa).

At S427 the chain carries Phosphoserine.

It belongs to the Rab GDI family. Interacts with RHOH. Interacts with the non-phosphorylated forms of RAB1A, RAB3A, RAB5A, RAB5B, RAB5C, RAB8A, RAB8B, RAB10, RAB12, RAB35, and RAB43. In terms of tissue distribution, high expression in brain, lower in other tissues.

The protein resides in the cytoplasm. The protein localises to the golgi apparatus. It is found in the trans-Golgi network. Its function is as follows. Regulates the GDP/GTP exchange reaction of most Rab proteins by inhibiting the dissociation of GDP from them, and the subsequent binding of GTP to them. Promotes the dissociation of GDP-bound Rab proteins from the membrane and inhibits their activation. Promotes the dissociation of RAB1A, RAB3A, RAB5A and RAB10 from membranes. The polypeptide is Rab GDP dissociation inhibitor alpha (Gdi1) (Rattus norvegicus (Rat)).